The chain runs to 206 residues: uncharacterized protein (206 aa).

This is an uncharacterized protein from Methanocaldococcus jannaschii (strain ATCC 43067 / DSM 2661 / JAL-1 / JCM 10045 / NBRC 100440) (Methanococcus jannaschii).